We begin with the raw amino-acid sequence, 109 residues long: Nucleoid-associated protein Sbal223_1770 (109 aa).

It belongs to the YbaB/EbfC family. As to quaternary structure, homodimer.

It is found in the cytoplasm. It localises to the nucleoid. Its function is as follows. Binds to DNA and alters its conformation. May be involved in regulation of gene expression, nucleoid organization and DNA protection. In Shewanella baltica (strain OS223), this protein is Nucleoid-associated protein Sbal223_1770.